A 442-amino-acid polypeptide reads, in one-letter code: Ribulose bisphosphate carboxylase/oxygenase activase 1, chloroplastic (442 aa).

Residues 1 to 58 constitute a chloroplast transit peptide; sequence MATSVSTIGAVNKTPLSLNNSVAGTSVPSTAFFGKTLKKVYGKGVSSPKVTNKSLRIV. ATP is bound at residue 169 to 176; sequence GGKGQGKS.

The protein belongs to the RuBisCO activase family.

The protein localises to the plastid. It is found in the chloroplast stroma. In terms of biological role, activation of RuBisCO (ribulose-1,5-bisphosphate carboxylase/oxygenase; EC 4.1.1.39) involves the ATP-dependent carboxylation of the epsilon-amino group of lysine leading to a carbamate structure. This Nicotiana tabacum (Common tobacco) protein is Ribulose bisphosphate carboxylase/oxygenase activase 1, chloroplastic.